The sequence spans 999 residues: Sarcoplasmic/endoplasmic reticulum calcium ATPase 3 (999 aa).

An N-acetylmethionine modification is found at methionine 1. At 1–48 the chain is on the cytoplasmic side; that stretch reads MEAAHLLPAADVLRHFSVTAEGGLSPAQVTGARERYGPNELPSEEGKS. Serine 17 is modified (phosphoserine). Threonine 19 carries the post-translational modification Phosphothreonine. Serine 25 carries the post-translational modification Phosphoserine. The chain crosses the membrane as a helical span at residues 49-69; it reads LWELVLEQFEDLLVRILLLAA. The Lumenal portion of the chain corresponds to 70–89; it reads LVSFVLAWFEEGEETTTAFV. The helical transmembrane segment at 90 to 110 threads the bilayer; sequence EPLVIMLILVANAIVGVWQER. The Cytoplasmic portion of the chain corresponds to 111–253; the sequence is NAESAIEALK…PERTPLQRKL (143 aa). The helical transmembrane segment at 254–273 threads the bilayer; that stretch reads DEFGRQLSHAISVICVAVWV. At 274-295 the chain is on the lumenal side; it reads INIGHFADPAHGGSWLRGAVYY. A helical membrane pass occupies residues 296–313; that stretch reads FKIAVALAVAAIPEGLPA. Residues valine 304, alanine 305, isoleucine 307, and glutamate 309 each contribute to the Ca(2+) site. Residues 314–757 lie on the Cytoplasmic side of the membrane; that stretch reads VITTCLALGT…EEGRAIYSNM (444 aa). Aspartate 351 acts as the 4-aspartylphosphate intermediate in catalysis. Residues aspartate 351 and threonine 353 each contribute to the Mg(2+) site. Threonine 353 is a binding site for ATP. Positions 370–400 are interaction with phospholamban 1; the sequence is AEADAGSCLLHEFTISGTTYTPEGEVRQGDQ. A Phosphothreonine modification is found at threonine 415. ATP contacts are provided by glutamate 442, arginine 489, lysine 515, arginine 560, threonine 625, glycine 626, and aspartate 627. The residue at position 662 (serine 662) is a Phosphoserine. 2 residues coordinate ATP: arginine 678 and lysine 684. Aspartate 703 provides a ligand contact to Mg(2+). Asparagine 706 contacts ATP. Residues 758-777 traverse the membrane as a helical segment; that stretch reads KQFIRYLISSNVGEVVCIFL. 2 residues coordinate Ca(2+): asparagine 768 and glutamate 771. The Lumenal segment spans residues 778–787; sequence TAILGLPEAL. Residues 788–808 form a helical membrane-spanning segment; that stretch reads IPVQLLWVNLVTDGLPATALG. Residues 788-808 form an interaction with phospholamban 2 region; that stretch reads IPVQLLWVNLVTDGLPATALG. Ca(2+)-binding residues include asparagine 796, threonine 799, and aspartate 800. Over 809-828 the chain is Cytoplasmic; sequence FNPPDLDIMEKLPRSPREAL. Residues 829–851 form a helical membrane-spanning segment; the sequence is ISGWLFFRYLAIGVYVGLATVAA. At 852–897 the chain is on the lumenal side; that stretch reads ATWWFVYDAEGPHINFYQLRNFLKCSEDNPLFAGIDCEVFESRFPT. Residues 898–917 traverse the membrane as a helical segment; it reads TMALSVLVTIEMCNALNSVS. Residue glutamate 908 coordinates Ca(2+). Topologically, residues 918 to 930 are cytoplasmic; that stretch reads ENQSLLRMPPWMN. Residues 931–949 form a helical membrane-spanning segment; sequence PWLLVAVAMSMALHFLILL. Residues 950 to 964 lie on the Lumenal side of the membrane; sequence VPPLPLIFQVTPLSG. The helical transmembrane segment at 965–985 threads the bilayer; sequence RQWVVVLQISLPVILLDEALK. The Cytoplasmic portion of the chain corresponds to 986–999; that stretch reads YLSRNHMHEEMSQK.

It belongs to the cation transport ATPase (P-type) (TC 3.A.3) family. Type IIA subfamily. In terms of assembly, interacts with sarcolipin (SLN). Interacts with phospholamban (PLN). Interacts with myoregulin (MRLN). Interacts with DWORF. Interacts with VMP1. Interacts with TUNAR; the interaction occurs at low levels in low glucose conditions and is increased by high glucose levels. Requires Mg(2+) as cofactor. In terms of tissue distribution, found in most tissues. Most abundant in thymus, trachea, salivary gland, spleen, bone marrow, lymph node, peripheral leukocytes, pancreas and colon. Also detected in fetal tissues. Expressed in cell lineages of hematopoietic, epithelial, or embryonic origin and also expressed in several cancer cell lines.

It localises to the nucleus membrane. Its subcellular location is the endoplasmic reticulum membrane. It is found in the sarcoplasmic reticulum membrane. It catalyses the reaction Ca(2+)(in) + ATP + H2O = Ca(2+)(out) + ADP + phosphate + H(+). Its activity is regulated as follows. Inhibited by sarcolipin (SLN), phospholamban (PLN) and myoregulin (MRLN). Enhanced by DWORF; DWORF increases activity by displacing sarcolipin (SLN), phospholamban (PLN) and myoregulin (MRLN). In terms of biological role, this magnesium-dependent enzyme catalyzes the hydrolysis of ATP coupled with the transport of calcium. Transports calcium ions from the cytosol into the sarcoplasmic/endoplasmic reticulum lumen. Contributes to calcium sequestration involved in muscular excitation/contraction. The sequence is that of Sarcoplasmic/endoplasmic reticulum calcium ATPase 3 from Homo sapiens (Human).